Consider the following 1588-residue polypeptide: Multicopy suppressor of chk1 protein 1 (1588 aa).

The segment at 38-60 (HAKPSTQQQQQQQNISNETTSTG) is disordered. Polar residues predominate over residues 51–60 (NISNETTSTG). The region spanning 82–124 (NVRVTPKKEEFSRGLDFISDLYDQTARKSGAVRVIPPDNWKCP) is the JmjN domain. The segment at 298-345 (KCKLCAQEGSSLVTCCICQSNYHYACVEAPFAPFSDIHYWTCNSCIPS) adopts a PHD-type 1 zinc-finger fold. Polar residues predominate over residues 385–395 (PLTLPSNTKTP). The disordered stretch occupies residues 385-412 (PLTLPSNTKTPPASARQSSRRTRSTSGK). The JmjC domain occupies 475-645 (FPTSRQNAYY…DMHAENSFNM (171 aa)). Positions 848-872 (EKRKPKRGSATHSHLESPSEEVEDL) are disordered. The PHD-type 2 zinc-finger motif lies at 1171–1220 (FHYCFCRQPEAGMMIECELCHEWYHAKCMKMSKKKLRADEKFICPICDYR). A disordered region spans residues 1319 to 1341 (APQPPPFIGESRSNRKPRPTKRQ). A PHD-type 3 zinc finger spans residues 1454 to 1505 (SVICLCRQPFAISDGTVQCHNCLEWFHYECVGLSSDIVSTLSNYACPDCCSK).

The protein resides in the nucleus. Its function is as follows. Has a role in regulating chromatin structure via global deacetylation of histone H3. This function is associated with the activity of a histone deacetylase. The chain is Multicopy suppressor of chk1 protein 1 (msc1) from Schizosaccharomyces pombe (strain 972 / ATCC 24843) (Fission yeast).